The chain runs to 78 residues: MGLSFQHILILLVVVLLLFGRNKISDLMGDFAKGIKAFKKGMSDDEVETAKSDSIKTIDNTGKPTNVQANPQRQDSTV.

A helical membrane pass occupies residues 4–21 (SFQHILILLVVVLLLFGR). A disordered region spans residues 49–78 (TAKSDSIKTIDNTGKPTNVQANPQRQDSTV). The span at 57-78 (TIDNTGKPTNVQANPQRQDSTV) shows a compositional bias: polar residues.

It belongs to the TatA/E family. As to quaternary structure, the Tat system comprises two distinct complexes: a TatABC complex, containing multiple copies of TatA, TatB and TatC subunits, and a separate TatA complex, containing only TatA subunits. Substrates initially bind to the TatABC complex, which probably triggers association of the separate TatA complex to form the active translocon.

It is found in the cell inner membrane. In terms of biological role, part of the twin-arginine translocation (Tat) system that transports large folded proteins containing a characteristic twin-arginine motif in their signal peptide across membranes. TatA could form the protein-conducting channel of the Tat system. In Afipia carboxidovorans (strain ATCC 49405 / DSM 1227 / KCTC 32145 / OM5) (Oligotropha carboxidovorans), this protein is Sec-independent protein translocase protein TatA.